Reading from the N-terminus, the 793-residue chain is Plakophilin-3 (793 aa).

Residues 56-82 (QLGQQPRHNGPAEPDGAAEAARGASRA) form a disordered region. The segment covering 66–82 (PAEPDGAAEAARGASRA) has biased composition (low complexity). Arg-81 bears the Omega-N-methylarginine mark. Residues Ser-122, Ser-179, and Ser-182 each carry the phosphoserine modification. Tyr-194 is modified (phosphotyrosine). The disordered stretch occupies residues 221–240 (SSSRAGGLDWPEATEGPPSR). A Phosphoserine modification is found at Ser-239. A Phosphothreonine modification is found at Thr-249. Arg-260 is modified (omega-N-methylarginine). Ser-282, Ser-310, Ser-311, and Ser-328 each carry phosphoserine. Residues 282–285 (SLSL) are required for interaction with SFN. Residues 291 to 720 (LPDMRGLDSY…ADVLINIIAV (430 aa)) are required for interaction with GSK3B. ARM repeat units follow at residues 302 to 345 (GHRT…HKCY), 348 to 387 (AAAK…NLVY), 390 to 429 (ADNK…NLSS), 446 to 484 (TDLV…NLSS), 488 to 533 (ATRQ…NLSY), 592 to 633 (PKGL…NITA), 641 to 680 (VLSR…NLSR), and 685 to 726 (KDEM…NLVV). The tract at residues 513 to 793 (VGKCEDKSVE…GYRKEDFLGP (281 aa)) is required for binding to PKP2 mRNA.

It belongs to the beta-catenin family. Found in a complex composed of CDH1, RAP1A and PKP3; PKP3 acts as a scaffold protein within the complex, the complex is required for CDH1 localization to mature desmosome cell junctions. Interacts with FXR1; the interaction facilitates the binding of PKP3 to PKP2 mRNA. Interacts (via ARM repeats) with GSK3B; the interaction may be involved in PKP3 protein degradation. Interacts with hyperphosphorylated and hypophosphorylated RB1; the interaction inhibits RB1 interaction with and repression of the transcription factor E2F1, potentially via sequestering RB1 to the cytoplasm. Interacts with CDKN1A; the interaction sequesters CDKN1A to the cytoplasm thereby repressing its role as an inhibitor of CDK4- and CDK6-driven RB1 phosphorylation. Interacts (via N-terminus) with SFN; the interaction maintains the cytoplasmic pool of PKP3, facilitates PKP3 exchange at desmosomes and restricts PKP3 localization to existing desmosome cell junctions. Interacts (via N-terminus) with SFN; the interaction maintains the cytoplasmic pool of PKP3 and restricts PKP3 localization to existing desmosome cell junctions. Interacts (via N-terminus) with JUP; the interaction is required for PKP3 localization to desmosome cell-cell junctions. Post-translationally, phosphorylated at Ser-282 when localized to the cytoplasm, PKP3 at desmosome cell junctions is not phosphorylated. Phosphorylation at Try-194 by SRC is induced by reactive oxygen species and potentially acts as a release mechanism from desmosome cell-cell junctions.

Its subcellular location is the nucleus. It is found in the cell junction. It localises to the desmosome. The protein resides in the cytoplasm. The protein localises to the cell membrane. Its subcellular location is the adherens junction. In terms of biological role, a component of desmosome cell-cell junctions which are required for positive regulation of cellular adhesion. Required for the localization of DSG2, DSP and PKP2 to mature desmosome junctions. May also play a role in the maintenance of DSG3 protein abundance in keratinocytes. Required for the formation of DSP-containing desmosome precursors in the cytoplasm during desmosome assembly. Also regulates the accumulation of CDH1 to mature desmosome junctions, via cAMP-dependent signaling and its interaction with activated RAP1A. Positively regulates the stabilization of PKP2 mRNA and therefore protein abundance, via its interaction with FXR1, may also regulate the protein abundance of DSP via the same mechanism. May also regulate the protein abundance of the desmosome component PKP1. Required for the organization of desmosome junctions at intercellular borders between basal keratinocytes of the epidermis, as a result plays a role in maintenance of the dermal barrier and regulation of the dermal inflammatory response. Required during epidermal keratinocyte differentiation for cell adherence at tricellular cell-cell contacts, via regulation of the timely formation of adherens junctions and desmosomes in a calcium-dependent manner, and may also play a role in the organization of the intracellular actin fiber belt. Acts as a negative regulator of the inflammatory response in hematopoietic cells of the skin and intestine, via modulation of proinflammatory cytokine production. Important for epithelial barrier maintenance in the intestine to reduce intestinal permeability, thereby plays a role in protection from intestinal-derived endotoxemia. Required for the development of hair follicles, via a role in the regulation of inner root sheaf length, correct alignment and anterior-posterior polarity of hair follicles. Promotes proliferation and cell-cycle G1/S phase transition of keratinocytes. Promotes E2F1-driven transcription of G1/S phase promoting genes by acting to release E2F1 from its inhibitory interaction with RB1, via sequestering RB1 and CDKN1A to the cytoplasm and thereby increasing CDK4- and CDK6-driven phosphorylation of RB1. May act as a scaffold protein to facilitate MAPK phosphorylation of RPS6KA protein family members and subsequently promote downstream EGFR signaling. May play a role in the positive regulation of transcription of Wnt-mediated TCF-responsive target genes. The protein is Plakophilin-3 (PKP3) of Bos taurus (Bovine).